A 1853-amino-acid polypeptide reads, in one-letter code: Cellulosomal-scaffolding protein A (1853 aa).

Residues 1 to 28 (MRKVISMLLVVAMLTTIFAAMIPQTVSA) form the signal peptide. Cohesin domains lie at 29-182 (ATMT…VPSD) and 183-322 (GVVV…VNVG). 2 linker (Pro/Thr-rich) regions span residues 323-363 (NATP…PANT) and 523-559 (GGSV…SDDP). Low complexity predominate over residues 323–364 (NATPTKGATPTNTATPTKSATATPTRPSVPTNTPTNTPANTP). Disordered stretches follow at residues 323-367 (NATP…PVSG) and 525-559 (SVVP…SDDP). In terms of domain architecture, CBM3 spans 365 to 523 (VSGNLKVEFY…GVLVWGKEPG (159 aa)). Residues 525–555 (SVVPSTQPVTTPPATTKPPATTKPPATTIPP) show a composition bias toward low complexity. Cohesin domains follow at residues 560–704 (NAIK…NVGD), 724–866 (AVRI…VNVG), 889–1031 (AVRI…VNVG), 1054–1196 (AVRI…VNVG), 1219–1361 (AVRI…VNVG), 1384–1526 (AVRI…VNVG), and 1548–1690 (KLTL…VLVT). Residues 1785–1852 (IMMWVGDIVK…FGATSSDYDA (68 aa)) form the Dockerin domain.

Post-translationally, O-glycosylated on most but not all Thr residues of the linker units. The reducing sugar is galactopyranose.

It localises to the secreted. In terms of biological role, acts as a scaffolding protein in the cellulosome. It promotes binding of cellulose to the catalytic domains of the cellulolytic enzymes. This is Cellulosomal-scaffolding protein A (cipA) from Acetivibrio thermocellus (strain ATCC 27405 / DSM 1237 / JCM 9322 / NBRC 103400 / NCIMB 10682 / NRRL B-4536 / VPI 7372) (Clostridium thermocellum).